The primary structure comprises 259 residues: Protein IQ-DOMAIN 10 (259 aa).

The interval 18–39 is disordered; the sequence is KNKSNRGNVHSETSNRVKPVES. Positions 50–77 constitute an IQ domain; it reads EVAVIRIQKAFRAFKARKRLCSLKSARR. The interval 61 to 71 is calmodulin-binding; sequence RAFKARKRLCS. Residues 226-259 are disordered; it reads KPSKKPEKSSPNNVITKTSAKPDEVGNSKKPGSG.

It belongs to the IQD family. In terms of assembly, binds to multiple calmodulin (CaM) in the presence of Ca(2+) and CaM-like proteins.

The protein resides in the nucleus. Its subcellular location is the cytoplasm. The protein localises to the cytoskeleton. Its function is as follows. May be involved in cooperative interactions with calmodulins or calmodulin-like proteins. Recruits calmodulin proteins to microtubules, thus being a potential scaffold in cellular signaling and trafficking. May associate with nucleic acids and regulate gene expression at the transcriptional or post-transcriptional level. In Arabidopsis thaliana (Mouse-ear cress), this protein is Protein IQ-DOMAIN 10.